A 72-amino-acid polypeptide reads, in one-letter code: Translation initiation factor IF-1 (72 aa).

In terms of domain architecture, S1-like spans 1 to 72 (MAKDDVIEVE…TRGRITYRYK (72 aa)). Phosphotyrosine is present on tyrosine 60.

Belongs to the IF-1 family. As to quaternary structure, component of the 30S ribosomal translation pre-initiation complex which assembles on the 30S ribosome in the order IF-2 and IF-3, IF-1 and N-formylmethionyl-tRNA(fMet); mRNA recruitment can occur at any time during PIC assembly.

It localises to the cytoplasm. One of the essential components for the initiation of protein synthesis. Stabilizes the binding of IF-2 and IF-3 on the 30S subunit to which N-formylmethionyl-tRNA(fMet) subsequently binds. Helps modulate mRNA selection, yielding the 30S pre-initiation complex (PIC). Upon addition of the 50S ribosomal subunit IF-1, IF-2 and IF-3 are released leaving the mature 70S translation initiation complex. The chain is Translation initiation factor IF-1 from Bacillus licheniformis (strain ATCC 14580 / DSM 13 / JCM 2505 / CCUG 7422 / NBRC 12200 / NCIMB 9375 / NCTC 10341 / NRRL NRS-1264 / Gibson 46).